Reading from the N-terminus, the 273-residue chain is Pantothenate synthetase (273 aa).

Position 27–34 (27–34 (MGALHNGH)) interacts with ATP. Histidine 34 serves as the catalytic Proton donor. Glutamine 58 lines the (R)-pantoate pocket. Position 58 (glutamine 58) interacts with beta-alanine. Residue 144-147 (GKKD) coordinates ATP. (R)-pantoate is bound at residue glutamine 150. Residues valine 173 and 181-184 (LSSR) each bind ATP.

Belongs to the pantothenate synthetase family. In terms of assembly, homodimer.

The protein resides in the cytoplasm. It carries out the reaction (R)-pantoate + beta-alanine + ATP = (R)-pantothenate + AMP + diphosphate + H(+). The protein operates within cofactor biosynthesis; (R)-pantothenate biosynthesis; (R)-pantothenate from (R)-pantoate and beta-alanine: step 1/1. Its function is as follows. Catalyzes the condensation of pantoate with beta-alanine in an ATP-dependent reaction via a pantoyl-adenylate intermediate. This chain is Pantothenate synthetase, found in Campylobacter fetus subsp. fetus (strain 82-40).